Here is a 139-residue protein sequence, read N- to C-terminus: Putative pre-16S rRNA nuclease (139 aa).

Belongs to the YqgF nuclease family.

Its subcellular location is the cytoplasm. Its function is as follows. Could be a nuclease involved in processing of the 5'-end of pre-16S rRNA. The polypeptide is Putative pre-16S rRNA nuclease (Legionella pneumophila subsp. pneumophila (strain Philadelphia 1 / ATCC 33152 / DSM 7513)).